The chain runs to 96 residues: uncharacterized protein (96 aa).

Helical transmembrane passes span 27–47 (LYTVNDFIIGAMFLVGSFFFF) and 52–72 (MSAGIWLFAIGSLLLLIRPTI).

It localises to the cell membrane. This is an uncharacterized protein from Bacillus subtilis (strain 168).